The primary structure comprises 330 residues: MKKSFIDQQKEISFVKNTFTQYLIDKLDVVEVQGPILSKVGDGMQDNLNGIENPVTVNVLQIPDATYEVVHSLAKWKRHTLARFGFNEGEGLVVNMKALRPDEDSLDATHSVYVDQWDWEKVIPDGHRNIAYLKETVETIYKVIRLTELAVEARYDIEAVLPKKITFIHSEELVEKYPDLTPKERENAITKEYGAVFLIGIGGVLPDGKPHDGRAPDYDDWTTESEKGYHGLNGDILVWNEQLGHAFELSSMGIRVDEDALKRQVEITGDQDRLKLDWHQALLHGQFPLTIGGGIGQSRMAMFLLRKKHIGEVQTSVWPDAVRETYENIL.

This sequence belongs to the class-II aminoacyl-tRNA synthetase family. AsnA subfamily.

It localises to the cytoplasm. The catalysed reaction is L-aspartate + NH4(+) + ATP = L-asparagine + AMP + diphosphate + H(+). It participates in amino-acid biosynthesis; L-asparagine biosynthesis; L-asparagine from L-aspartate (ammonia route): step 1/1. The chain is Aspartate--ammonia ligase from Streptococcus thermophilus (strain CNRZ 1066).